We begin with the raw amino-acid sequence, 194 residues long: Ras-like protein RAS1 (194 aa).

16–23 lines the GTP pocket; that stretch reads GAGGVGKS. The Effector region motif lies at 38–46; sequence YDPTIEDSY. GTP-binding positions include 63–67 and 122–125; these read DTAGQ and NKVD. At cysteine 191 the chain carries Cysteine methyl ester. Cysteine 191 carries S-geranylgeranyl cysteine lipidation. Residues 192-194 constitute a propeptide, removed in mature form; that stretch reads TLL.

Belongs to the small GTPase superfamily. Ras family.

It localises to the cell membrane. It carries out the reaction GTP + H2O = GDP + phosphate + H(+). Its activity is regulated as follows. Alternates between an inactive form bound to GDP and an active form bound to GTP. Activated by a guanine nucleotide-exchange factor (GEF) and inactivated by a GTPase-activating protein (GAP). Ras proteins bind GDP/GTP and possess intrinsic GTPase activity. The chain is Ras-like protein RAS1 (RAS1) from Hydra vulgaris (Hydra).